Consider the following 192-residue polypeptide: Elongation factor P (192 aa).

It belongs to the elongation factor P family.

It localises to the cytoplasm. It functions in the pathway protein biosynthesis; polypeptide chain elongation. Its function is as follows. Involved in peptide bond synthesis. Stimulates efficient translation and peptide-bond synthesis on native or reconstituted 70S ribosomes in vitro. Probably functions indirectly by altering the affinity of the ribosome for aminoacyl-tRNA, thus increasing their reactivity as acceptors for peptidyl transferase. In Borrelia turicatae (strain 91E135), this protein is Elongation factor P.